Consider the following 73-residue polypeptide: uncharacterized protein (73 aa).

Belongs to the asfivirus DP63R family.

This is an uncharacterized protein from African swine fever virus (isolate Tick/Malawi/Lil 20-1/1983) (ASFV).